Consider the following 374-residue polypeptide: MHFTQVLISLSVLIACGPVGYGDITAHQQPSTATEESEQCSTCEFRQHSKLMRLHAIKSQILSKLRLKQAPNISRDVVKQLLPKAPPLQQLLDQYDVLGDDSKDGAVEEDDEHATTETIMTMATEPDPIVQVDRKPKCCFFSFSPKIQANRIVRAQLWVHLRPAEEATTVFLQISRLMPVKDGGRHRIRSLKIDVNAGVTSWQSIDVKQVLTVWLKQPETNRGIEINAYDAKGNDLAVTSTETGEDGLLPFMEVKISEGPKRIRRDSGLDCDENSSESRCCRYPLTVDFEDFGWDWIIAPKRYKANYCSGECDYMYLQKYPHTHLVNKASPRGTAGPCCTPTKMSPINMLYFNGKEQIIYGKIPSMVVDRCGCS.

The first 22 residues, 1–22 (MHFTQVLISLSVLIACGPVGYG), serve as a signal peptide directing secretion. A propeptide spanning residues 23-265 (DITAHQQPST…ISEGPKRIRR (243 aa)) is cleaved from the precursor. N-linked (GlcNAc...) asparagine glycosylation is found at Asn72 and Asn274. 4 disulfides stabilise this stretch: Cys271–Cys281, Cys280–Cys339, Cys308–Cys371, and Cys312–Cys373.

It belongs to the TGF-beta family. In terms of assembly, homodimer; disulfide-linked. Predominantly expressed in muscle. At hatching, expression is strongest in the skin epithelium, and is also found in the retina and brain. From day 28, expressed in skeletal muscle. In the adult, highest expression is seen in the gastrointestinal tract, brain, muscle, heart and testis. Also expressed in the adult pharynx, kidney, spleen, liver, gill, eyes, skin, swim bladder and ovary.

The protein resides in the secreted. Acts specifically as a negative regulator of skeletal muscle growth. May down-regulate muscle-specific transcription factors such as myod and myog. The chain is Growth/differentiation factor 8 (mstnb) from Danio rerio (Zebrafish).